The sequence spans 526 residues: Cytochrome P450 4F5 (526 aa).

Heme is bound at residue Cys-470.

Belongs to the cytochrome P450 family. Heme is required as a cofactor. As to expression, high expression in liver and kidney. Lower expression in brain.

The protein resides in the endoplasmic reticulum membrane. It is found in the microsome membrane. The catalysed reaction is an organic molecule + reduced [NADPH--hemoprotein reductase] + O2 = an alcohol + oxidized [NADPH--hemoprotein reductase] + H2O + H(+). The chain is Cytochrome P450 4F5 (Cyp4f5) from Rattus norvegicus (Rat).